Consider the following 408-residue polypeptide: COP9 signalosome complex subunit 4 (408 aa).

In terms of domain architecture, PCI spans 194-374 (RIQDARRRFL…GIIYFESNTT (181 aa)).

Belongs to the CSN4 family. In terms of assembly, component of the COP9 signalosome (CSN) complex.

It localises to the cytoplasm. The protein localises to the nucleus. In terms of biological role, component of the COP9 signalosome (CSN) complex that acts as an regulator of the ubiquitin (Ubl) conjugation pathway by mediating the deneddylation of the cullin subunit of SCF-type E3 ubiquitin-protein ligase complexes. The CSN complex seems to link protein degradation to sexual development. Required for fruit body formation. The protein is COP9 signalosome complex subunit 4 (csnD) of Emericella nidulans (strain FGSC A4 / ATCC 38163 / CBS 112.46 / NRRL 194 / M139) (Aspergillus nidulans).